A 317-amino-acid chain; its full sequence is Small ribosomal subunit protein RACK1 (317 aa).

WD repeat units follow at residues 15–55, 64–103, 106–146, 148–188, 191–230, 232–272, and 281–317; these read GHNG…DNQY, GHSH…TTQR, GHKG…ATLT, HNDW…VNAD, GHTG…TLYT, EAKA…DELK, and AKDP…TPSA.

It belongs to the WD repeat G protein beta family. Ribosomal protein RACK1 subfamily. Component of the small ribosomal subunit. Mature ribosomes consist of a small (40S) and a large (60S) subunit. The 40S subunit contains about 32 different proteins and 1 molecule of RNA (18S). The 60S subunit contains 45 different proteins and 3 molecules of RNA (25S, 5.8S and 5S).

It localises to the cytoplasm. Functionally, component of the ribosome, a large ribonucleoprotein complex responsible for the synthesis of proteins in the cell. The small ribosomal subunit (SSU) binds messenger RNAs (mRNAs) and translates the encoded message by selecting cognate aminoacyl-transfer RNA (tRNA) molecules. The large subunit (LSU) contains the ribosomal catalytic site termed the peptidyl transferase center (PTC), which catalyzes the formation of peptide bonds, thereby polymerizing the amino acids delivered by tRNAs into a polypeptide chain. The nascent polypeptides leave the ribosome through a tunnel in the LSU and interact with protein factors that function in enzymatic processing, targeting, and the membrane insertion of nascent chains at the exit of the ribosomal tunnel. Located at the head of the 40S ribosomal subunit in the vicinity of the mRNA exit channel, it serves as a scaffold protein that can recruit other proteins to the ribosome. Involved in the negative regulation of translation of a specific subset of proteins. Plays a role in morphogenesis and pathogenesis. This is Small ribosomal subunit protein RACK1 from Candida albicans (strain SC5314 / ATCC MYA-2876) (Yeast).